We begin with the raw amino-acid sequence, 420 residues long: Protein MucB (420 aa).

A UmuC domain is found at 2–187 (FALIDVNGMY…LPVAEVWGVG (186 aa)).

This sequence belongs to the DNA polymerase type-Y family.

Involved in UV protection and mutation. In Escherichia coli, this protein is Protein MucB (mucB).